Reading from the N-terminus, the 378-residue chain is Dual-specificity RNA methyltransferase RlmN (378 aa).

Catalysis depends on E95, which acts as the Proton acceptor. The Radical SAM core domain occupies 101–345 (EETRGTLCVS…TTIRKTRGDD (245 aa)). The cysteines at positions 108 and 350 are disulfide-linked. [4Fe-4S] cluster is bound by residues C115, C119, and C122. Residues 176 to 177 (GE), S208, 230 to 232 (SLH), and N307 each bind S-adenosyl-L-methionine. The active-site S-methylcysteine intermediate is C350.

This sequence belongs to the radical SAM superfamily. RlmN family. [4Fe-4S] cluster serves as cofactor.

It is found in the cytoplasm. The enzyme catalyses adenosine(2503) in 23S rRNA + 2 reduced [2Fe-2S]-[ferredoxin] + 2 S-adenosyl-L-methionine = 2-methyladenosine(2503) in 23S rRNA + 5'-deoxyadenosine + L-methionine + 2 oxidized [2Fe-2S]-[ferredoxin] + S-adenosyl-L-homocysteine. It carries out the reaction adenosine(37) in tRNA + 2 reduced [2Fe-2S]-[ferredoxin] + 2 S-adenosyl-L-methionine = 2-methyladenosine(37) in tRNA + 5'-deoxyadenosine + L-methionine + 2 oxidized [2Fe-2S]-[ferredoxin] + S-adenosyl-L-homocysteine. Functionally, specifically methylates position 2 of adenine 2503 in 23S rRNA and position 2 of adenine 37 in tRNAs. m2A2503 modification seems to play a crucial role in the proofreading step occurring at the peptidyl transferase center and thus would serve to optimize ribosomal fidelity. This is Dual-specificity RNA methyltransferase RlmN from Burkholderia pseudomallei (strain K96243).